Reading from the N-terminus, the 119-residue chain is Protein yippee-like 3 (119 aa).

The Yippee domain occupies 19–116 (RRYSCVHCRA…IELSHMIKDN (98 aa)). Zn(2+)-binding residues include C23, C26, C79, and C82.

This sequence belongs to the yippee family.

Its subcellular location is the nucleus. The protein localises to the nucleolus. Functionally, may be involved in proliferation and apoptosis in myeloid precursor cells. The sequence is that of Protein yippee-like 3 (ypel3) from Danio rerio (Zebrafish).